A 379-amino-acid polypeptide reads, in one-letter code: F420-dependent formate dehydrogenase subunit beta (379 aa).

4Fe-4S ferredoxin-type domains follow at residues 271 to 301 (EKWK…CSLE) and 321 to 351 (IRLS…YIFH). 8 residues coordinate [4Fe-4S] cluster: C280, C283, C286, C290, C330, C333, C336, and C340.

The protein belongs to the FrhB family. As to quaternary structure, dimer of an alpha (FdhA) and a beta (FdhB) subunit. It depends on [4Fe-4S] cluster as a cofactor. The cofactor is FAD. Zn(2+) is required as a cofactor.

The enzyme catalyses oxidized coenzyme F420-(gamma-L-Glu)(n) + formate + 2 H(+) = reduced coenzyme F420-(gamma-L-Glu)(n) + CO2. Its function is as follows. Catalyzes the oxidation of formate to carbon dioxide, with coenzyme F420 as the electron acceptor. This Methanocaldococcus jannaschii (strain ATCC 43067 / DSM 2661 / JAL-1 / JCM 10045 / NBRC 100440) (Methanococcus jannaschii) protein is F420-dependent formate dehydrogenase subunit beta (fdhB).